A 293-amino-acid polypeptide reads, in one-letter code: Acetylglutamate kinase (293 aa).

Residues G65 to G66, R87, and N188 each bind substrate.

The protein belongs to the acetylglutamate kinase family. ArgB subfamily.

The protein localises to the cytoplasm. It carries out the reaction N-acetyl-L-glutamate + ATP = N-acetyl-L-glutamyl 5-phosphate + ADP. The protein operates within amino-acid biosynthesis; L-arginine biosynthesis; N(2)-acetyl-L-ornithine from L-glutamate: step 2/4. Catalyzes the ATP-dependent phosphorylation of N-acetyl-L-glutamate. This is Acetylglutamate kinase from Symbiobacterium thermophilum (strain DSM 24528 / JCM 14929 / IAM 14863 / T).